The primary structure comprises 169 residues: Ribosome maturation factor RimM (169 aa).

The PRC barrel domain occupies 94-166 (EEGFYDHELE…TATITPPDGL (73 aa)).

The protein belongs to the RimM family. As to quaternary structure, binds ribosomal protein uS19.

It is found in the cytoplasm. An accessory protein needed during the final step in the assembly of 30S ribosomal subunit, possibly for assembly of the head region. Essential for efficient processing of 16S rRNA. May be needed both before and after RbfA during the maturation of 16S rRNA. It has affinity for free ribosomal 30S subunits but not for 70S ribosomes. The chain is Ribosome maturation factor RimM from Corynebacterium efficiens (strain DSM 44549 / YS-314 / AJ 12310 / JCM 11189 / NBRC 100395).